The following is a 504-amino-acid chain: ATP synthase subunit alpha, chloroplastic (504 aa).

An ATP-binding site is contributed by 170–177 (GDRQTGKT).

Belongs to the ATPase alpha/beta chains family. In terms of assembly, F-type ATPases have 2 components, CF(1) - the catalytic core - and CF(0) - the membrane proton channel. CF(1) has five subunits: alpha(3), beta(3), gamma(1), delta(1), epsilon(1). CF(0) has four main subunits: a, b, b' and c.

It localises to the plastid. The protein localises to the chloroplast thylakoid membrane. It carries out the reaction ATP + H2O + 4 H(+)(in) = ADP + phosphate + 5 H(+)(out). Functionally, produces ATP from ADP in the presence of a proton gradient across the membrane. The alpha chain is a regulatory subunit. The sequence is that of ATP synthase subunit alpha, chloroplastic from Cyanidium caldarium (Red alga).